The chain runs to 191 residues: Lipopolysaccharide export system protein LptC (191 aa).

Residues 7-25 traverse the membrane as a helical segment; it reads WVIIVLSLAVLVMIGINMA.

It belongs to the LptC family. As to quaternary structure, component of the lipopolysaccharide transport and assembly complex. Interacts with LptA and the LptBFG transporter complex.

Its subcellular location is the cell inner membrane. Involved in the assembly of lipopolysaccharide (LPS). Required for the translocation of LPS from the inner membrane to the outer membrane. Facilitates the transfer of LPS from the inner membrane to the periplasmic protein LptA. Could be a docking site for LptA. In Escherichia coli O157:H7, this protein is Lipopolysaccharide export system protein LptC.